A 439-amino-acid polypeptide reads, in one-letter code: Dolichyl-diphosphooligosaccharide--protein glycosyltransferase 48 kDa subunit (439 aa).

The first 26 residues, 1 to 26 (MATRAARVWSGWWLLLLPLLGLAGAS), serve as a signal peptide directing secretion. The Lumenal portion of the chain corresponds to 27–409 (GPRTLVLLDN…QYERFIPSAY (383 aa)). Residues 410-430 (PYYASAFSMMLGLFIFSVVFL) form a helical membrane-spanning segment. The Cytoplasmic segment spans residues 431-439 (HMKEKEKSD).

This sequence belongs to the DDOST 48 kDa subunit family. As to quaternary structure, component of the oligosaccharyltransferase (OST) complex. OST exists in two different complex forms which contain common core subunits RPN1, RPN2, OST48, OST4, DAD1 and TMEM258, either STT3A or STT3B as catalytic subunits, and form-specific accessory subunits. STT3A complex assembly occurs through the formation of 3 subcomplexes. Subcomplex 1 contains RPN1 and TMEM258, subcomplex 2 contains the STT3A-specific subunits STT3A, DC2/OSTC, and KCP2 as well as the core subunit OST4, and subcomplex 3 contains RPN2, DAD1, and OST48. The STT3A complex can form stable complexes with the Sec61 complex or with both the Sec61 and TRAP complexes. Interacts with SMIM22.

It is found in the endoplasmic reticulum membrane. Its pathway is protein modification; protein glycosylation. In terms of biological role, subunit of the oligosaccharyl transferase (OST) complex that catalyzes the initial transfer of a defined glycan (Glc(3)Man(9)GlcNAc(2) in eukaryotes) from the lipid carrier dolichol-pyrophosphate to an asparagine residue within an Asn-X-Ser/Thr consensus motif in nascent polypeptide chains, the first step in protein N-glycosylation. N-glycosylation occurs cotranslationally and the complex associates with the Sec61 complex at the channel-forming translocon complex that mediates protein translocation across the endoplasmic reticulum (ER). All subunits are required for a maximal enzyme activity. Required for the assembly of both SST3A- and SS3B-containing OST complexes. This chain is Dolichyl-diphosphooligosaccharide--protein glycosyltransferase 48 kDa subunit, found in Bos taurus (Bovine).